We begin with the raw amino-acid sequence, 382 residues long: 1-deoxy-D-xylulose 5-phosphate reductoisomerase (382 aa).

The NADPH site is built by threonine 10, glycine 11, serine 12, isoleucine 13, glycine 36, and asparagine 122. Lysine 123 serves as a coordination point for 1-deoxy-D-xylulose 5-phosphate. NADPH is bound at residue glutamate 124. Aspartate 148 provides a ligand contact to Mn(2+). 4 residues coordinate 1-deoxy-D-xylulose 5-phosphate: serine 149, glutamate 150, serine 174, and histidine 197. Residue glutamate 150 participates in Mn(2+) binding. Glycine 203 is an NADPH binding site. Serine 210, asparagine 215, lysine 216, and glutamate 219 together coordinate 1-deoxy-D-xylulose 5-phosphate. Glutamate 219 lines the Mn(2+) pocket.

It belongs to the DXR family. Mg(2+) serves as cofactor. It depends on Mn(2+) as a cofactor.

It catalyses the reaction 2-C-methyl-D-erythritol 4-phosphate + NADP(+) = 1-deoxy-D-xylulose 5-phosphate + NADPH + H(+). Its pathway is isoprenoid biosynthesis; isopentenyl diphosphate biosynthesis via DXP pathway; isopentenyl diphosphate from 1-deoxy-D-xylulose 5-phosphate: step 1/6. In terms of biological role, catalyzes the NADPH-dependent rearrangement and reduction of 1-deoxy-D-xylulose-5-phosphate (DXP) to 2-C-methyl-D-erythritol 4-phosphate (MEP). This Prosthecochloris aestuarii (strain DSM 271 / SK 413) protein is 1-deoxy-D-xylulose 5-phosphate reductoisomerase.